The sequence spans 475 residues: tRNA-dihydrouridine(16/17) synthase [NAD(P)(+)]-like (475 aa).

Residues 23–25 (PMV) and Q79 each bind FMN. The active-site Proton donor is the C108. Residues K147, H175, 208–210 (NGN), and 232–233 (AE) each bind FMN. Residues 343–388 (GPREGSKENSGGRSKRALEEEEGSMEGLSKNKLKKQLRNPHKTFDP) are disordered. Positions 373-383 (NKLKKQLRNPH) are enriched in basic residues.

This sequence belongs to the Dus family. Dus1 subfamily. FMN serves as cofactor.

It localises to the cytoplasm. Its subcellular location is the nucleus. It carries out the reaction 5,6-dihydrouridine(16) in tRNA + NADP(+) = uridine(16) in tRNA + NADPH + H(+). The catalysed reaction is 5,6-dihydrouridine(16) in tRNA + NAD(+) = uridine(16) in tRNA + NADH + H(+). The enzyme catalyses 5,6-dihydrouridine(17) in tRNA + NAD(+) = uridine(17) in tRNA + NADH + H(+). It catalyses the reaction 5,6-dihydrouridine(17) in tRNA + NADP(+) = uridine(17) in tRNA + NADPH + H(+). In terms of biological role, catalyzes the synthesis of dihydrouridine, a modified base found in the D-loop of most tRNAs. Specifically modifies U16 and U17 in cytoplasmic tRNAs. Affects the level of some mature tRNA and thereby the total cellular translation. This is tRNA-dihydrouridine(16/17) synthase [NAD(P)(+)]-like (Dus1l) from Mus musculus (Mouse).